The primary structure comprises 642 residues: Threonine--tRNA ligase (642 aa).

Residues 1-63 (MNDITVTLPD…YNDARVVIVT (63 aa)) enclose the TGS domain. Positions 242–533 (DHRKIGQELD…LIEHFNGKFP (292 aa)) are catalytic. Zn(2+) is bound by residues Cys-334, His-385, and His-510.

Belongs to the class-II aminoacyl-tRNA synthetase family. Homodimer. Zn(2+) serves as cofactor.

It localises to the cytoplasm. It catalyses the reaction tRNA(Thr) + L-threonine + ATP = L-threonyl-tRNA(Thr) + AMP + diphosphate + H(+). Its function is as follows. Catalyzes the attachment of threonine to tRNA(Thr) in a two-step reaction: L-threonine is first activated by ATP to form Thr-AMP and then transferred to the acceptor end of tRNA(Thr). The sequence is that of Threonine--tRNA ligase from Haloquadratum walsbyi (strain DSM 16790 / HBSQ001).